The following is a 401-amino-acid chain: Probable tRNA sulfurtransferase (401 aa).

In terms of domain architecture, THUMP spans 63-168 (TTAEQALSYL…EREAFLYGAR (106 aa)). ATP contacts are provided by residues 186-187 (LL), 211-212 (YF), R268, G290, and Q299.

Belongs to the ThiI family.

Its subcellular location is the cytoplasm. It carries out the reaction [ThiI sulfur-carrier protein]-S-sulfanyl-L-cysteine + a uridine in tRNA + 2 reduced [2Fe-2S]-[ferredoxin] + ATP + H(+) = [ThiI sulfur-carrier protein]-L-cysteine + a 4-thiouridine in tRNA + 2 oxidized [2Fe-2S]-[ferredoxin] + AMP + diphosphate. It catalyses the reaction [ThiS sulfur-carrier protein]-C-terminal Gly-Gly-AMP + S-sulfanyl-L-cysteinyl-[cysteine desulfurase] + AH2 = [ThiS sulfur-carrier protein]-C-terminal-Gly-aminoethanethioate + L-cysteinyl-[cysteine desulfurase] + A + AMP + 2 H(+). The protein operates within cofactor biosynthesis; thiamine diphosphate biosynthesis. Functionally, catalyzes the ATP-dependent transfer of a sulfur to tRNA to produce 4-thiouridine in position 8 of tRNAs, which functions as a near-UV photosensor. Also catalyzes the transfer of sulfur to the sulfur carrier protein ThiS, forming ThiS-thiocarboxylate. This is a step in the synthesis of thiazole, in the thiamine biosynthesis pathway. The sulfur is donated as persulfide by IscS. The polypeptide is Probable tRNA sulfurtransferase (Treponema pallidum (strain Nichols)).